The sequence spans 2453 residues: Nuclear receptor corepressor 1 (2453 aa).

Residues 1–29 are compositionally biased toward polar residues; it reads MSSSGYPPNQGAFSTEQSRYPSHSVQYTF. Disordered regions lie at residues 1 to 116, 147 to 177, and 206 to 231; these read MSSS…QVSD, PAFG…SKLS, and QQQL…VEQK. Residues 1-373 form an interaction with ZBTB33 and HEXIM1 region; sequence MSSSGYPPNQ…QRGAGLSATI (373 aa). Over residues 51–64 the composition is skewed to low complexity; that stretch reads SQASQLLQQQQQQQ. Composition is skewed to basic and acidic residues over residues 77–88 and 99–116; these read PGSDRPQERRSG and VDHD…QVSD. Serine 172 carries the post-translational modification Phosphoserine. Positions 174 to 216 form a coiled coil; it reads SKLSKEELIQSMDRVDREIAKVEQQILKLKKKQQQLEEEAAKP. Over residues 212–221 the composition is skewed to basic and acidic residues; that stretch reads EAAKPPEPEK. Serine 224 is modified (phosphoserine). Residues 254–312 form an interaction with SIN3A/B region; sequence FEGLGPKVELPLYNQPSDTKVYHENIKTNQVMRKKLILFFKRRNHARKQREQKICQRYD. Positions 299–328 form a coiled coil; the sequence is ARKQREQKICQRYDQLMEAWEKKVDRIENN. Residues 435–486 enclose the SANT 1 domain; the sequence is QFMNVWTDHEKEIFKDKFIQHPKNFGLIASYLERKSVPDCVLYYYLTKKNEN. Disordered regions lie at residues 497–631 and 677–908; these read KRRG…TEEE and LLQQ…PERQ. Residues 501 to 550 adopt a coiled-coil conformation; that stretch reads RNQQIARPSQEEKVEEKEEDKAEKTEKKEEEKKDDEEKDDKEDSKETTKE. 2 stretches are compositionally biased toward basic and acidic residues: residues 509-531 and 541-556; these read SQEE…KEEE and KEDS…RTEA. The segment covering 592 to 604 has biased composition (low complexity); the sequence is EAAAANAAAAATE. The span at 605 to 616 shows a compositional bias: pro residues; that stretch reads EPPPPLPPPPEP. In terms of domain architecture, SANT 2 spans 622–673; that stretch reads VETSRWTEEEMEVAKKGLVEHGRNWAAIAKMVGTKSEAQCKNFYFNYKRRHN. Polar residues predominate over residues 697-707; it reads QCESVASTVSA. Residues 708–727 show a composition bias toward acidic residues; sequence QEDEDIEASNEEENPEDSEG. Low complexity predominate over residues 771–787; sequence TTDPAPCASPSSAVPTT. Over residues 851 to 885 the composition is skewed to basic and acidic residues; the sequence is GEGDAKERDLESTSEKTEARDEDVVVAEQIERPEP. Serine 1011 bears the Phosphoserine mark. The segment at 1034-1058 is disordered; the sequence is VRLPTTRPTRPPPPLIPSSKTTVAS. Lysine 1117 participates in a covalent cross-link: Glycyl lysine isopeptide (Lys-Gly) (interchain with G-Cter in SUMO1); alternate. A Glycyl lysine isopeptide (Lys-Gly) (interchain with G-Cter in SUMO2); alternate cross-link involves residue lysine 1117. Serine 1122 carries the phosphoserine modification. Residue lysine 1195 forms a Glycyl lysine isopeptide (Lys-Gly) (interchain with G-Cter in SUMO2) linkage. 5 positions are modified to phosphoserine: serine 1206, serine 1207, serine 1274, serine 1292, and serine 1333. Lysine 1347 is subject to N6-acetyllysine. Threonine 1378 is modified (phosphothreonine). Residue lysine 1400 forms a Glycyl lysine isopeptide (Lys-Gly) (interchain with G-Cter in SUMO2) linkage. Lysine 1423 is covalently cross-linked (Glycyl lysine isopeptide (Lys-Gly) (interchain with G-Cter in SUMO2); alternate). Lysine 1423 is modified (N6-acetyllysine; alternate). Residues 1450 to 1544 are disordered; the sequence is GEPVRARHTS…SIPAKSPVPG (95 aa). Serine 1459 and serine 1481 each carry phosphoserine. The segment covering 1459 to 1469 has biased composition (polar residues); the sequence is SVVSSGPSVLR. Polar residues predominate over residues 1495-1514; that stretch reads VSYQNTISRGSPMMNRTSDV. Positions 1510–2453 are interaction with C1D; sequence RTSDVSSSKS…QYETLSDSDD (944 aa). Residue lysine 1525 forms a Glycyl lysine isopeptide (Lys-Gly) (interchain with G-Cter in SUMO2) linkage. Serine 1598 is modified (phosphoserine). 2 disordered regions span residues 1697 to 1780 and 1902 to 1939; these read RPYN…VRTQ and ALPS…RTRG. Composition is skewed to basic and acidic residues over residues 1718–1745 and 1919–1937; these read AERE…RERI and AGKD…ELRT. Positions 1949–1953 match the CORNR box 1 motif; it reads IDVII. The interval 1959–2060 is disordered; sequence SDKDARERGS…SSQSEGMGQV (102 aa). Positions 1968 to 1979 are enriched in low complexity; the sequence is SQSSDSSSSLSS. Phosphoserine occurs at positions 1993 and 1997. Residues 2050–2129 are ID1; that stretch reads PSSQSEGMGQ…QSQTVLHPRP (80 aa). Positions 2065 to 2068 are required for interaction with RARA in the absence of its ligand; it reads RLIT. A CORNR box 2 motif is present at residues 2073–2077; sequence ICQII. The span at 2088-2124 shows a compositional bias: polar residues; the sequence is SQASTSTFQTSPSALSSTPVRTKTSSRYSPESQSQTV. Positions 2088-2174 are disordered; sequence SQASTSTFQT…SPPQGPAVHE (87 aa). Phosphoserine occurs at positions 2116, 2134, 2150, 2165, and 2198. A compositionally biased stretch (basic and acidic residues) spans 2138-2156; sequence LVDKSRGSRPGKSPERSHI. Residues 2226–2287 are ID2; sequence IFRKLNSSGG…EDIIRKALMG (62 aa). Residues 2277–2281 carry the CORNR box 3 motif; that stretch reads LEDII. Residues 2303–2396 form a disordered region; the sequence is PVGIMPGSAS…RPSSTGSTQF (94 aa). Low complexity predominate over residues 2310–2319; the sequence is SASTSVVTSS. At threonine 2412 the chain carries Phosphothreonine. 2 positions are modified to phosphoserine: serine 2449 and serine 2451.

The protein belongs to the N-CoR nuclear receptor corepressors family. As to quaternary structure, forms a large corepressor complex that contains SIN3A/B and histone deacetylases HDAC1 and HDAC2. This complex associates with the thyroid receptor (TR) and the retinoid acid receptor (RAR) in the absence of ligand. Interacts directly with RARA; the interaction is facilitated with RARA trimethylation. Component of the N-Cor repressor complex, at least composed of CBFA2T3, HEXIM1, NCOR1, NCOR2, HDAC3, TBL1X, TBL1XR1, CORO2A and GPS2. Interacts with ZBTB33; the interaction serves to recruit the N-CoR complex to promoter regions containing methylated CpG dinucleotides. Interacts with TRIM28 and KDM3A. Interacts (via the RD1 domain) with BAZ1A (via its N-terminal); the interaction corepresses a number of NCOR1-regulated genes. Interacts with BCL6, C1D, DACH1, HEXIM1, HDAC7, RORA, RORC, SAP30, SIAH2, SIN3A and SIN3B. May interact with DEAF1. Interacts with RXRA. Interacts with SETD5. Interacts with VDR. Interacts with ZBTB7A. Interacts with AR. Interacts with HDAC3. Post-translationally, ubiquitinated; mediated by SIAH2 and leading to its subsequent proteasomal degradation. Ubiquitous.

It localises to the nucleus. Its function is as follows. Mediates transcriptional repression by certain nuclear receptors. Part of a complex which promotes histone deacetylation and the formation of repressive chromatin structures which may impede the access of basal transcription factors. Participates in the transcriptional repressor activity produced by BCL6. Recruited by ZBTB7A to the androgen response elements/ARE on target genes, negatively regulates androgen receptor signaling and androgen-induced cell proliferation. Mediates the NR1D1-dependent repression and circadian regulation of TSHB expression. The NCOR1-HDAC3 complex regulates the circadian expression of the core clock gene ARTNL/BMAL1 and the genes involved in lipid metabolism in the liver. This chain is Nuclear receptor corepressor 1 (Ncor1), found in Mus musculus (Mouse).